Reading from the N-terminus, the 358-residue chain is Fructose-bisphosphate aldolase 5, cytosolic (358 aa).

Position 2 is an N-acetylserine (Ser-2). A substrate-binding site is contributed by Arg-39. Cys-68 carries the S-glutathionyl cysteine; transient modification. At Cys-173 the chain carries S-glutathionyl cysteine; transient; alternate. The residue at position 173 (Cys-173) is an S-nitrosocysteine; transient; alternate. Glu-183 acts as the Proton acceptor in catalysis. Lys-225 (schiff-base intermediate with dihydroxyacetone-P) is an active-site residue. Substrate-binding positions include 266–268 (SGG) and Arg-298. The residue at position 350 (Ser-350) is a Phosphoserine.

It belongs to the class I fructose-bisphosphate aldolase family. In terms of assembly, homotetramer. Interacts with TRX3. S-glutathionylated at Cys-68 and Cys-173. Post-translationally, S-nitrosylated at Cys-173. Expressed in rosette leaves and cauline leaves.

It localises to the cytoplasm. The protein resides in the cytosol. It catalyses the reaction beta-D-fructose 1,6-bisphosphate = D-glyceraldehyde 3-phosphate + dihydroxyacetone phosphate. The protein operates within carbohydrate degradation; glycolysis; D-glyceraldehyde 3-phosphate and glycerone phosphate from D-glucose: step 4/4. In terms of biological role, fructose-bisphosphate aldolase that plays a key role in glycolysis and gluconeogenesis. This Arabidopsis thaliana (Mouse-ear cress) protein is Fructose-bisphosphate aldolase 5, cytosolic.